A 160-amino-acid polypeptide reads, in one-letter code: Endoribonuclease YbeY (160 aa).

Zn(2+) contacts are provided by histidine 121, histidine 125, and histidine 131.

It belongs to the endoribonuclease YbeY family. Requires Zn(2+) as cofactor.

It is found in the cytoplasm. Functionally, single strand-specific metallo-endoribonuclease involved in late-stage 70S ribosome quality control and in maturation of the 3' terminus of the 16S rRNA. This Hydrogenovibrio crunogenus (strain DSM 25203 / XCL-2) (Thiomicrospira crunogena) protein is Endoribonuclease YbeY.